We begin with the raw amino-acid sequence, 315 residues long: D-alanine--D-alanine ligase (315 aa).

The region spanning 101–297 is the ATP-grasp domain; that stretch reads KHIFRSLNID…FNELVKIIIE (197 aa). 128–181 contacts ATP; sequence KIDYPYVLKPINEGSSIGVYIIFSHEDYLELKNNSSTIMEKMIVEEYIPGIELH. Mg(2+)-binding residues include Asp-249, Glu-263, and Asn-265.

Belongs to the D-alanine--D-alanine ligase family. Requires Mg(2+) as cofactor. Mn(2+) serves as cofactor.

It is found in the cytoplasm. It catalyses the reaction 2 D-alanine + ATP = D-alanyl-D-alanine + ADP + phosphate + H(+). It participates in cell wall biogenesis; peptidoglycan biosynthesis. In terms of biological role, cell wall formation. This Wolbachia pipientis wMel protein is D-alanine--D-alanine ligase.